The chain runs to 115 residues: Large ribosomal subunit protein bL19 (115 aa).

Belongs to the bacterial ribosomal protein bL19 family.

In terms of biological role, this protein is located at the 30S-50S ribosomal subunit interface and may play a role in the structure and function of the aminoacyl-tRNA binding site. The chain is Large ribosomal subunit protein bL19 from Lacticaseibacillus casei (strain BL23) (Lactobacillus casei).